We begin with the raw amino-acid sequence, 814 residues long: Spore development regulator umv1 (814 aa).

6 disordered regions span residues 1-36 (MSRP…GSTE), 96-134 (HDRP…VRRG), 267-333 (QGLK…MPRS), 407-441 (PPRD…RAGP), 457-501 (PVRS…ASLT), and 539-814 (QSSG…NQPY). Residues 7–18 (RSGNASTPQGTS) show a composition bias toward polar residues. The region spanning 53 to 274 (RDHIEYQLTV…AEQGLKVRVR (222 aa)) is the Velvet domain. The segment covering 271-285 (VRVRKHPRSRRRGSK) has biased composition (basic residues). Positions 407–423 (PPRDFADGRYMDGDYPP) are enriched in basic and acidic residues. The short motif at 438-445 (RAGPSEYS) is the Nuclear localization signal element. Over residues 620-631 (AAARRSPIPSAR) the composition is skewed to low complexity. Basic and acidic residues-rich tracts occupy residues 723–741 (TRDR…DRDQ) and 760–796 (GELD…RRDF). The segment covering 800–814 (TMPSKPSSRGHNQPY) has biased composition (polar residues).

Belongs to the velvet family. VosA subfamily. In terms of assembly, forms a heterodimeric complex with velB; the formation of the VEL2-VOS1 complex is light-dependent.

The protein resides in the nucleus. Its function is as follows. Component of the velB-VosA heterodimeric complex that plays a dual role in activating genes associated with spore maturation and repressing certain development-associated genes. The complex binds DNA through the DNA-binding domain of vosA that recognizes an 11-nucleotide consensus sequence 5'-CTGGCCGCGGC-3' consisting of two motifs in the promoters of key developmental regulatory genes. Required for gall induction and teliospore formation on seedlings. The sequence is that of Spore development regulator umv1 from Mycosarcoma maydis (Corn smut fungus).